Consider the following 237-residue polypeptide: Demethylmenaquinone methyltransferase (237 aa).

S-adenosyl-L-methionine-binding positions include Thr58, Asp79, and 106–107; that span reads NA.

The protein belongs to the class I-like SAM-binding methyltransferase superfamily. MenG/UbiE family.

It catalyses the reaction a 2-demethylmenaquinol + S-adenosyl-L-methionine = a menaquinol + S-adenosyl-L-homocysteine + H(+). It functions in the pathway quinol/quinone metabolism; menaquinone biosynthesis; menaquinol from 1,4-dihydroxy-2-naphthoate: step 2/2. In terms of biological role, methyltransferase required for the conversion of demethylmenaquinol (DMKH2) to menaquinol (MKH2). The chain is Demethylmenaquinone methyltransferase from Bacillus cytotoxicus (strain DSM 22905 / CIP 110041 / 391-98 / NVH 391-98).